Here is a 283-residue protein sequence, read N- to C-terminus: Protein/nucleic acid deglycase HchA (283 aa).

Zn(2+) contacts are provided by His86, Glu91, and His123. Cys185 serves as the catalytic Nucleophile.

The protein belongs to the peptidase C56 family. HchA subfamily. Homodimer.

Its subcellular location is the cytoplasm. The enzyme catalyses N(omega)-(1-hydroxy-2-oxopropyl)-L-arginyl-[protein] + H2O = lactate + L-arginyl-[protein] + H(+). It catalyses the reaction N(6)-(1-hydroxy-2-oxopropyl)-L-lysyl-[protein] + H2O = lactate + L-lysyl-[protein] + H(+). The catalysed reaction is S-(1-hydroxy-2-oxopropyl)-L-cysteinyl-[protein] + H2O = lactate + L-cysteinyl-[protein] + H(+). It carries out the reaction N(omega)-(1-hydroxy-2-oxoethyl)-L-arginyl-[protein] + H2O = L-arginyl-[protein] + glycolate + H(+). The enzyme catalyses N(6)-(1-hydroxy-2-oxoethyl)-L-lysyl-[protein] + H2O = glycolate + L-lysyl-[protein] + H(+). It catalyses the reaction S-(1-hydroxy-2-oxoethyl)-L-cysteinyl-[protein] + H2O = glycolate + L-cysteinyl-[protein] + H(+). The catalysed reaction is N(2)-(1-hydroxy-2-oxopropyl)-dGTP + H2O = lactate + dGTP + H(+). It carries out the reaction N(2)-(1-hydroxy-2-oxopropyl)-GTP + H2O = lactate + GTP + H(+). The enzyme catalyses N(2)-(1-hydroxy-2-oxopropyl)-GDP + H2O = lactate + GDP + H(+). It catalyses the reaction N(2)-(1-hydroxy-2-oxopropyl)-GMP + H2O = lactate + GMP + H(+). The catalysed reaction is N(2)-(1-hydroxy-2-oxoethyl)-dGTP + H2O = dGTP + glycolate + H(+). It carries out the reaction N(2)-(1-hydroxy-2-oxoethyl)-GTP + H2O = glycolate + GTP + H(+). The enzyme catalyses N(2)-(1-hydroxy-2-oxoethyl)-GDP + H2O = glycolate + GDP + H(+). It catalyses the reaction N(2)-(1-hydroxy-2-oxoethyl)-GMP + H2O = glycolate + GMP + H(+). The catalysed reaction is an N(2)-(1-hydroxy-2-oxopropyl)-guanosine in RNA + H2O = a guanosine in RNA + lactate + H(+). It carries out the reaction an N(2)-(1-hydroxy-2-oxopropyl)-2'-deoxyguanosine in DNA + H2O = a 2'-deoxyguanosine in DNA + lactate + H(+). The enzyme catalyses an N(2)-(1-hydroxy-2-oxoethyl)-guanosine in RNA + H2O = a guanosine in RNA + glycolate + H(+). It catalyses the reaction an N(2)-(1-hydroxy-2-oxoethyl)-2'-deoxyguanosine in DNA + H2O = a 2'-deoxyguanosine in DNA + glycolate + H(+). In terms of biological role, protein and nucleotide deglycase that catalyzes the deglycation of the Maillard adducts formed between amino groups of proteins or nucleotides and reactive carbonyl groups of glyoxals. Thus, functions as a protein deglycase that repairs methylglyoxal- and glyoxal-glycated proteins, and releases repaired proteins and lactate or glycolate, respectively. Deglycates cysteine, arginine and lysine residues in proteins, and thus reactivates these proteins by reversing glycation by glyoxals. Acts on early glycation intermediates (hemithioacetals and aminocarbinols), preventing the formation of Schiff bases and advanced glycation endproducts (AGE). Also functions as a nucleotide deglycase able to repair glycated guanine in the free nucleotide pool (GTP, GDP, GMP, dGTP) and in DNA and RNA. Is thus involved in a major nucleotide repair system named guanine glycation repair (GG repair), dedicated to reversing methylglyoxal and glyoxal damage via nucleotide sanitization and direct nucleic acid repair. Plays an important role in protecting cells from carbonyl stress. This chain is Protein/nucleic acid deglycase HchA, found in Escherichia coli (strain K12 / MC4100 / BW2952).